Reading from the N-terminus, the 105-residue chain is UPF0166 protein aq_450 (105 aa).

Belongs to the UPF0166 family.

In Aquifex aeolicus (strain VF5), this protein is UPF0166 protein aq_450.